Reading from the N-terminus, the 1070-residue chain is DNA-directed RNA polymerase subunit beta (1070 aa).

The protein belongs to the RNA polymerase beta chain family. As to quaternary structure, in plastids the minimal PEP RNA polymerase catalytic core is composed of four subunits: alpha, beta, beta', and beta''. When a (nuclear-encoded) sigma factor is associated with the core the holoenzyme is formed, which can initiate transcription.

The protein localises to the plastid. It is found in the chloroplast. It catalyses the reaction RNA(n) + a ribonucleoside 5'-triphosphate = RNA(n+1) + diphosphate. In terms of biological role, DNA-dependent RNA polymerase catalyzes the transcription of DNA into RNA using the four ribonucleoside triphosphates as substrates. In Chaetosphaeridium globosum (Charophycean green alga), this protein is DNA-directed RNA polymerase subunit beta.